The chain runs to 83 residues: Glutaredoxin 3 (83 aa).

Residues 2-83 (ANVEIYTKET…ARGGLDPLLK (82 aa)) form the Glutaredoxin domain. An intrachain disulfide couples Cys-12 to Cys-15.

Belongs to the glutaredoxin family. In terms of assembly, monomer.

Functionally, the disulfide bond functions as an electron carrier in the glutathione-dependent synthesis of deoxyribonucleotides by the enzyme ribonucleotide reductase. In addition, it is also involved in reducing some disulfides in a coupled system with glutathione reductase. The protein is Glutaredoxin 3 (grxC) of Escherichia coli O157:H7.